We begin with the raw amino-acid sequence, 369 residues long: Anhydro-N-acetylmuramic acid kinase (369 aa).

12–19 serves as a coordination point for ATP; sequence GTSLDGVD.

This sequence belongs to the anhydro-N-acetylmuramic acid kinase family.

It catalyses the reaction 1,6-anhydro-N-acetyl-beta-muramate + ATP + H2O = N-acetyl-D-muramate 6-phosphate + ADP + H(+). The protein operates within amino-sugar metabolism; 1,6-anhydro-N-acetylmuramate degradation. It functions in the pathway cell wall biogenesis; peptidoglycan recycling. Catalyzes the specific phosphorylation of 1,6-anhydro-N-acetylmuramic acid (anhMurNAc) with the simultaneous cleavage of the 1,6-anhydro ring, generating MurNAc-6-P. Is required for the utilization of anhMurNAc either imported from the medium or derived from its own cell wall murein, and thus plays a role in cell wall recycling. The protein is Anhydro-N-acetylmuramic acid kinase of Escherichia coli O8 (strain IAI1).